The primary structure comprises 779 residues: Endonuclease MutS2 (779 aa).

Gly-328–Thr-335 is a binding site for ATP. Residues Leu-704 to Gly-779 enclose the Smr domain.

The protein belongs to the DNA mismatch repair MutS family. MutS2 subfamily. In terms of assembly, homodimer. Binds to stalled ribosomes, contacting rRNA.

Its function is as follows. Endonuclease that is involved in the suppression of homologous recombination and thus may have a key role in the control of bacterial genetic diversity. Functionally, acts as a ribosome collision sensor, splitting the ribosome into its 2 subunits. Detects stalled/collided 70S ribosomes which it binds and splits by an ATP-hydrolysis driven conformational change. Acts upstream of the ribosome quality control system (RQC), a ribosome-associated complex that mediates the extraction of incompletely synthesized nascent chains from stalled ribosomes and their subsequent degradation. Probably generates substrates for RQC. This chain is Endonuclease MutS2, found in Streptococcus pyogenes serotype M5 (strain Manfredo).